A 120-amino-acid polypeptide reads, in one-letter code: NAD(P)H-quinone oxidoreductase subunit 3, chloroplastic (120 aa).

A run of 3 helical transmembrane segments spans residues 11 to 31, 65 to 85, and 89 to 109; these read VVFF…SKLI, FALI…WAIV, and LGIT…IGLV.

It belongs to the complex I subunit 3 family. In terms of assembly, NDH is composed of at least 16 different subunits, 5 of which are encoded in the nucleus.

The protein resides in the plastid. It localises to the chloroplast thylakoid membrane. The catalysed reaction is a plastoquinone + NADH + (n+1) H(+)(in) = a plastoquinol + NAD(+) + n H(+)(out). It carries out the reaction a plastoquinone + NADPH + (n+1) H(+)(in) = a plastoquinol + NADP(+) + n H(+)(out). In terms of biological role, NDH shuttles electrons from NAD(P)H:plastoquinone, via FMN and iron-sulfur (Fe-S) centers, to quinones in the photosynthetic chain and possibly in a chloroplast respiratory chain. The immediate electron acceptor for the enzyme in this species is believed to be plastoquinone. Couples the redox reaction to proton translocation, and thus conserves the redox energy in a proton gradient. This chain is NAD(P)H-quinone oxidoreductase subunit 3, chloroplastic, found in Mesostigma viride (Green alga).